Consider the following 361-residue polypeptide: MRVDLFDFELPEERIALRPAEPRDSAKMLVVKSGEALDDRKVGDLPSLLRAGDVLVFNDTKVIPAQLKGIRRRGEAQAQVEATLHMRVAPDRWLAFMRPGKRIAAGDRIHFGHDGNSCFLGQLDATVIEKGEGGEALLGFDLSGPFLDEALHAVGHIPLPPYIASKRDDDERDRADYQTIYAREEGAVAAPTAGLHFTPELFAALDAKGVERHFVTLHVGAGTFLPVKADDTADHKMHAEIGSVSRETADALNAAKARGGRIIAVGTTSLRLLESAAREDGTVPAWSGPTDIFITPGYRFRTADMLMTNFHLPRSTLFMLVSAFSGLDTMGAAYAHAIANRYRFYSYGDASLLYRAEMSDG.

This sequence belongs to the QueA family. In terms of assembly, monomer.

The protein resides in the cytoplasm. The catalysed reaction is 7-aminomethyl-7-carbaguanosine(34) in tRNA + S-adenosyl-L-methionine = epoxyqueuosine(34) in tRNA + adenine + L-methionine + 2 H(+). It functions in the pathway tRNA modification; tRNA-queuosine biosynthesis. Functionally, transfers and isomerizes the ribose moiety from AdoMet to the 7-aminomethyl group of 7-deazaguanine (preQ1-tRNA) to give epoxyqueuosine (oQ-tRNA). This is S-adenosylmethionine:tRNA ribosyltransferase-isomerase from Mesorhizobium japonicum (strain LMG 29417 / CECT 9101 / MAFF 303099) (Mesorhizobium loti (strain MAFF 303099)).